A 1157-amino-acid chain; its full sequence is ATP-dependent helicase/deoxyribonuclease subunit B (1157 aa).

The UvrD-like helicase ATP-binding domain maps to 1 to 277 (MTLQIIAGKA…KILLENKRAN (277 aa)). ATP is bound at residue 8 to 15 (GKAGTGKT). One can recognise a UvrD-like helicase C-terminal domain in the interval 271 to 590 (LENKRANSDS…VLADMENAKL (320 aa)). Positions 794, 1115, 1118, and 1124 each coordinate [4Fe-4S] cluster.

It belongs to the helicase family. AddB/RexB type 1 subfamily. As to quaternary structure, heterodimer of AddA and AddB. The cofactor is Mg(2+). Requires [4Fe-4S] cluster as cofactor.

Functionally, the heterodimer acts as both an ATP-dependent DNA helicase and an ATP-dependent, dual-direction single-stranded exonuclease. Recognizes the chi site generating a DNA molecule suitable for the initiation of homologous recombination. The AddB subunit has 5' -&gt; 3' nuclease activity but not helicase activity. The sequence is that of ATP-dependent helicase/deoxyribonuclease subunit B from Listeria innocua serovar 6a (strain ATCC BAA-680 / CLIP 11262).